The chain runs to 145 residues: Alpha-amylase/trypsin inhibitor CM2 (145 aa).

The N-terminal stretch at 1-25 (MASKSSITHLLLAAVLVSVFAAAAA) is a signal peptide.

It belongs to the protease inhibitor I6 (cereal trypsin/alpha-amylase inhibitor) family. Developing endosperm.

Its subcellular location is the secreted. Its function is as follows. Alpha-amylase/trypsin inhibitor. It could be involved in insect defense mechanisms. The polypeptide is Alpha-amylase/trypsin inhibitor CM2 (Triticum aestivum (Wheat)).